The sequence spans 173 residues: Crossover junction endodeoxyribonuclease RuvC (173 aa).

Active-site residues include Asp-8, Glu-67, and Asp-139. Mg(2+) is bound by residues Asp-8, Glu-67, and Asp-139.

This sequence belongs to the RuvC family. In terms of assembly, homodimer which binds Holliday junction (HJ) DNA. The HJ becomes 2-fold symmetrical on binding to RuvC with unstacked arms; it has a different conformation from HJ DNA in complex with RuvA. In the full resolvosome a probable DNA-RuvA(4)-RuvB(12)-RuvC(2) complex forms which resolves the HJ. It depends on Mg(2+) as a cofactor.

It localises to the cytoplasm. The catalysed reaction is Endonucleolytic cleavage at a junction such as a reciprocal single-stranded crossover between two homologous DNA duplexes (Holliday junction).. The RuvA-RuvB-RuvC complex processes Holliday junction (HJ) DNA during genetic recombination and DNA repair. Endonuclease that resolves HJ intermediates. Cleaves cruciform DNA by making single-stranded nicks across the HJ at symmetrical positions within the homologous arms, yielding a 5'-phosphate and a 3'-hydroxyl group; requires a central core of homology in the junction. The consensus cleavage sequence is 5'-(A/T)TT(C/G)-3'. Cleavage occurs on the 3'-side of the TT dinucleotide at the point of strand exchange. HJ branch migration catalyzed by RuvA-RuvB allows RuvC to scan DNA until it finds its consensus sequence, where it cleaves and resolves the cruciform DNA. This is Crossover junction endodeoxyribonuclease RuvC from Vibrio cholerae serotype O1 (strain ATCC 39541 / Classical Ogawa 395 / O395).